Consider the following 438-residue polypeptide: tRNA-2-methylthio-N(6)-dimethylallyladenosine synthase (438 aa).

The region spanning 4–120 (KKLYIDTVGC…VPEMVKDAEA (117 aa)) is the MTTase N-terminal domain. 6 residues coordinate [4Fe-4S] cluster: Cys13, Cys49, Cys83, Cys158, Cys162, and Cys165. The Radical SAM core domain maps to 144–377 (GRKRVSAFVT…QAVHSRIHNE (234 aa)). Residues 377–438 (ETYVGSTQQV…YANSLLGELL (62 aa)) form the TRAM domain.

This sequence belongs to the methylthiotransferase family. MiaB subfamily. Monomer. It depends on [4Fe-4S] cluster as a cofactor.

Its subcellular location is the cytoplasm. The catalysed reaction is N(6)-dimethylallyladenosine(37) in tRNA + (sulfur carrier)-SH + AH2 + 2 S-adenosyl-L-methionine = 2-methylsulfanyl-N(6)-dimethylallyladenosine(37) in tRNA + (sulfur carrier)-H + 5'-deoxyadenosine + L-methionine + A + S-adenosyl-L-homocysteine + 2 H(+). In terms of biological role, catalyzes the methylthiolation of N6-(dimethylallyl)adenosine (i(6)A), leading to the formation of 2-methylthio-N6-(dimethylallyl)adenosine (ms(2)i(6)A) at position 37 in tRNAs that read codons beginning with uridine. The polypeptide is tRNA-2-methylthio-N(6)-dimethylallyladenosine synthase (Trichlorobacter lovleyi (strain ATCC BAA-1151 / DSM 17278 / SZ) (Geobacter lovleyi)).